A 286-amino-acid polypeptide reads, in one-letter code: 3-hydroxyanthranilate 3,4-dioxygenase (286 aa).

The tract at residues 1-160 is domain A (catalytic); that stretch reads MERCVRVKSW…SEQYRTGKPN (160 aa). Residue R43 coordinates O2. The Fe cation site is built by H47, E53, and H91. E53 is a substrate binding site. 2 residues coordinate substrate: R95 and E105. The linker stretch occupies residues 161 to 177; sequence PDQLLKEPPFPLSTRSV. Positions 178–286 are domain B; sequence MEPMSLKAWL…QDPACKKPLG (109 aa).

It belongs to the 3-HAO family. Monomer. The cofactor is Fe(2+).

The protein localises to the cytoplasm. Its subcellular location is the cytosol. The catalysed reaction is 3-hydroxyanthranilate + O2 = (2Z,4Z)-2-amino-3-carboxymuconate 6-semialdehyde. Its pathway is cofactor biosynthesis; NAD(+) biosynthesis; quinolinate from L-kynurenine: step 3/3. In terms of biological role, catalyzes the oxidative ring opening of 3-hydroxyanthranilate to 2-amino-3-carboxymuconate semialdehyde, which spontaneously cyclizes to quinolinate. This is 3-hydroxyanthranilate 3,4-dioxygenase (Haao) from Rattus norvegicus (Rat).